A 126-amino-acid chain; its full sequence is Small ribosomal subunit protein uS13 (126 aa).

Residues 92–126 (HRRGLPVRGQRTKTNARTRKGPRKTVAGKKKATRK) form a disordered region.

It belongs to the universal ribosomal protein uS13 family. As to quaternary structure, part of the 30S ribosomal subunit. Forms a loose heterodimer with protein S19. Forms two bridges to the 50S subunit in the 70S ribosome.

In terms of biological role, located at the top of the head of the 30S subunit, it contacts several helices of the 16S rRNA. In the 70S ribosome it contacts the 23S rRNA (bridge B1a) and protein L5 of the 50S subunit (bridge B1b), connecting the 2 subunits; these bridges are implicated in subunit movement. Contacts the tRNAs in the A and P-sites. The chain is Small ribosomal subunit protein uS13 from Deinococcus geothermalis (strain DSM 11300 / CIP 105573 / AG-3a).